The primary structure comprises 326 residues: Tetraacyldisaccharide 4'-kinase (326 aa).

Position 53-60 (53-60) interacts with ATP; that stretch reads SVGGNGKT.

Belongs to the LpxK family.

The enzyme catalyses a lipid A disaccharide + ATP = a lipid IVA + ADP + H(+). The protein operates within glycolipid biosynthesis; lipid IV(A) biosynthesis; lipid IV(A) from (3R)-3-hydroxytetradecanoyl-[acyl-carrier-protein] and UDP-N-acetyl-alpha-D-glucosamine: step 6/6. In terms of biological role, transfers the gamma-phosphate of ATP to the 4'-position of a tetraacyldisaccharide 1-phosphate intermediate (termed DS-1-P) to form tetraacyldisaccharide 1,4'-bis-phosphate (lipid IVA). The sequence is that of Tetraacyldisaccharide 4'-kinase from Actinobacillus pleuropneumoniae serotype 7 (strain AP76).